Reading from the N-terminus, the 160-residue chain is Cytochrome b6-f complex subunit 4 (160 aa).

The next 3 helical transmembrane spans lie at 36 to 56 (LLYMFPVCILGTIACNVGLAV), 95 to 115 (LLGVLLMASVPVGLITVPFIE), and 131 to 151 (TIFLIGTVVAVWLGIGATLPI).

Belongs to the cytochrome b family. PetD subfamily. In terms of assembly, the 4 large subunits of the cytochrome b6-f complex are cytochrome b6, subunit IV (17 kDa polypeptide, petD), cytochrome f and the Rieske protein, while the 4 small subunits are petG, petL, petM and petN. The complex functions as a dimer.

The protein localises to the plastid. The protein resides in the chloroplast thylakoid membrane. Functionally, component of the cytochrome b6-f complex, which mediates electron transfer between photosystem II (PSII) and photosystem I (PSI), cyclic electron flow around PSI, and state transitions. The protein is Cytochrome b6-f complex subunit 4 of Staurastrum punctulatum (Green alga).